The following is a 354-amino-acid chain: Ornithine carbamoyltransferase, catabolic (354 aa).

Residues 67 to 70 (STRT), Gln-94, Arg-118, and 145 to 148 (HPTQ) contribute to the carbamoyl phosphate site. Residues Asn-177, Asp-241, and 245 to 246 (SM) contribute to the L-ornithine site. Carbamoyl phosphate is bound by residues 284–285 (CL) and Arg-329.

It belongs to the aspartate/ornithine carbamoyltransferase superfamily. OTCase family.

The protein resides in the cytoplasm. It carries out the reaction carbamoyl phosphate + L-ornithine = L-citrulline + phosphate + H(+). The protein operates within amino-acid degradation; L-arginine degradation via ADI pathway; carbamoyl phosphate from L-arginine: step 2/2. Its function is as follows. Reversibly catalyzes the transfer of the carbamoyl group from carbamoyl phosphate (CP) to the N(epsilon) atom of ornithine (ORN) to produce L-citrulline. The protein is Ornithine carbamoyltransferase, catabolic (arcB) of Lactococcus lactis subsp. lactis (strain IL1403) (Streptococcus lactis).